The primary structure comprises 759 residues: DNA topoisomerase 3 (759 aa).

The Toprim domain maps to 3 to 147; that stretch reads RALFVAEKND…RLDIFRARFS (145 aa). The 426-residue stretch at 165 to 590 folds into the Topo IA-type catalytic domain; sequence DEKTVAAVDC…EQIGKYRAIF (426 aa). The active-site O-(5'-phospho-DNA)-tyrosine intermediate is the Y334. Positions 609 to 715 are disordered; the sequence is DKNNQAGGGP…KEQEEEEEVF (107 aa). The segment covering 614 to 639 has biased composition (gly residues); it reads AGGGPGGPGGGGGPPRGPGGGGGGGP. Over residues 640 to 649 the composition is skewed to pro residues; the sequence is TGPPAPPKPP. Positions 716, 718, 743, and 753 each coordinate Zn(2+). The GRF-type zinc-finger motif lies at 716–759; sequence CQCPEPMRAVTKVVQKEGPNKGKKFYTCSLPYTSSEKCNFFKWA.

This sequence belongs to the type IA topoisomerase family. As to quaternary structure, component of the BTR double Holliday Junction dissolution complex composed of at least him-6, top-3, rmh-1 and rmif-2, which is involved in double strand break repair in the germline. May interact with rmh-1.

It localises to the nucleus. It catalyses the reaction ATP-independent breakage of single-stranded DNA, followed by passage and rejoining.. Functionally, component of the BTR double Holliday Junction dissolution complex, which is involved in homologous recombination during meiotic double strand break in the germline. Releases the supercoiling and torsional tension of DNA introduced during the DNA replication and transcription by transiently cleaving and rejoining one strand of the DNA duplex. Introduces a single-strand break via transesterification at a target site in duplex DNA. The scissile phosphodiester is attacked by the catalytic tyrosine of the enzyme, resulting in the formation of a DNA-(5'-phosphotyrosyl)-enzyme intermediate and the expulsion of a 3'-OH DNA strand. The free DNA strand than undergoes passage around the unbroken strand thus removing DNA supercoils. Finally, in the religation step, the DNA 3'-OH attacks the covalent intermediate to expel the active-site tyrosine and restore the DNA phosphodiester backbone. The protein is DNA topoisomerase 3 of Caenorhabditis elegans.